A 416-amino-acid polypeptide reads, in one-letter code: Lysosome-associated membrane glycoprotein 3 (416 aa).

An N-terminal signal peptide occupies residues 1–27; that stretch reads MPRQLSAAAALFASLAVILHDGSQMRA. Residues 28–381 lie on the Lumenal side of the membrane; that stretch reads KAFPETRDYS…NVDECSSDYT (354 aa). N-linked (GlcNAc...) asparagine glycans are attached at residues asparagine 112, asparagine 158, asparagine 164, asparagine 200, asparagine 232, asparagine 266, and asparagine 291. Disordered stretches follow at residues 136-167 and 179-219; these read PTITPPAHTTGTSSSTVSHTTGNTTQPSNQTT and STTG…LAPQ. Positions 143–160 are enriched in low complexity; that stretch reads HTTGTSSSTVSHTTGNTT. Over residues 188–208 the composition is skewed to low complexity; that stretch reads PTHAPGTTAAAHNTTRTAAPA. The cysteines at positions 237 and 274 are disulfide-linked. Residues cysteine 339 and cysteine 376 are joined by a disulfide bond. A helical membrane pass occupies residues 382-402; that stretch reads IVLPVIGAIVVGLCLMGMGVY. At 403–416 the chain is on the cytoplasmic side; that stretch reads KIRLRCQSSGYQRI.

It belongs to the LAMP family. Monomer. Interacts with FURIN. In terms of assembly, (Microbial infection) Interacts with mumps virus protein F; this interaction promotes protein F cleavage by FURIN. Detected in tonsil interdigitating dendritic cells, in spleen, lymph node, Peyer's patches in the small instestine, in thymus medulla and in B-cells (at protein level). Expressed in lymphoid organs and dendritic cells. Expressed in lung. Up-regulated in carcinomas of the esophagus, colon, rectum, ureter, stomach, breast, fallopian tube, thyroid and parotid tissues.

Its subcellular location is the cell surface. The protein resides in the lysosome membrane. The protein localises to the cytoplasmic vesicle membrane. It localises to the early endosome membrane. Lysosomal membrane glycoprotein which plays a role in the unfolded protein response (UPR) that contributes to protein degradation and cell survival during proteasomal dysfunction. Plays a role in the process of fusion of the lysosome with the autophagosome, thereby modulating the autophagic process. Promotes hepatocellular lipogenesis through activation of the PI3K/Akt pathway. May also play a role in dendritic cell function and in adaptive immunity. Functionally, (Microbial infection) Plays a positive role in post-entry steps of influenza A virus replication, either virus uncoating, cytosolic transport, or nuclear import of viral components, and promotes nuclear accumulation of influenza nucleoprotein/NP at early stages of viral infection. In terms of biological role, (Microbial infection) Supports the FURIN-mediated cleavage of mumps virus fusion protein F by interacting with both FURIN and the unprocessed form but not the processed form of the viral protein F. Its function is as follows. (Microbial infection) Promotes the intracellular proliferation of Salmonella typhimuium. In Homo sapiens (Human), this protein is Lysosome-associated membrane glycoprotein 3 (LAMP3).